A 250-amino-acid polypeptide reads, in one-letter code: Shieldin complex subunit 3 (250 aa).

The tract at residues 28-83 (QDFPTRPLSRFIPWFPYDGSKLPLRPKRSPPVISEEAAEDVKQYLTISEHDAKSHS) is sufficient for interaction with MAD2L2. A compositionally biased stretch (polar residues) spans 108–119 (LKEQTNSGNLGK). The tract at residues 108 to 129 (LKEQTNSGNLGKQSEKGKQHKR) is disordered.

As to quaternary structure, component of the shieldin complex, consisting of SHLD1, SHLD2, SHLD3 and MAD2L2/REV7. Within the complex, SHLD2 forms a scaffold which interacts with a SHLD3-MAD2L2 subcomplex via its N-terminus, and with SHLD1 via its C-terminus. Interacts with ASTE1.

Its subcellular location is the chromosome. In terms of biological role, component of the shieldin complex, which plays an important role in repair of DNA double-stranded breaks (DSBs). During G1 and S phase of the cell cycle, the complex functions downstream of TP53BP1 to promote non-homologous end joining (NHEJ) and suppress DNA end resection. Mediates various NHEJ-dependent processes including immunoglobulin class-switch recombination, and fusion of unprotected telomeres. This chain is Shieldin complex subunit 3, found in Homo sapiens (Human).